The sequence spans 289 residues: 4-hydroxy-3-methylbut-2-enyl diphosphate reductase (289 aa).

C12 lines the [4Fe-4S] cluster pocket. Residues H41 and H84 each contribute to the (2E)-4-hydroxy-3-methylbut-2-enyl diphosphate site. 2 residues coordinate dimethylallyl diphosphate: H41 and H84. Isopentenyl diphosphate is bound by residues H41 and H84. C106 lines the [4Fe-4S] cluster pocket. Residue H134 coordinates (2E)-4-hydroxy-3-methylbut-2-enyl diphosphate. H134 lines the dimethylallyl diphosphate pocket. H134 contributes to the isopentenyl diphosphate binding site. E136 functions as the Proton donor in the catalytic mechanism. S172 serves as a coordination point for (2E)-4-hydroxy-3-methylbut-2-enyl diphosphate. C200 contacts [4Fe-4S] cluster. Positions 229, 231, and 273 each coordinate (2E)-4-hydroxy-3-methylbut-2-enyl diphosphate. S229, N231, and S273 together coordinate dimethylallyl diphosphate. The isopentenyl diphosphate site is built by S229, N231, and S273.

The protein belongs to the IspH family. [4Fe-4S] cluster serves as cofactor.

The enzyme catalyses isopentenyl diphosphate + 2 oxidized [2Fe-2S]-[ferredoxin] + H2O = (2E)-4-hydroxy-3-methylbut-2-enyl diphosphate + 2 reduced [2Fe-2S]-[ferredoxin] + 2 H(+). It carries out the reaction dimethylallyl diphosphate + 2 oxidized [2Fe-2S]-[ferredoxin] + H2O = (2E)-4-hydroxy-3-methylbut-2-enyl diphosphate + 2 reduced [2Fe-2S]-[ferredoxin] + 2 H(+). The protein operates within isoprenoid biosynthesis; dimethylallyl diphosphate biosynthesis; dimethylallyl diphosphate from (2E)-4-hydroxy-3-methylbutenyl diphosphate: step 1/1. It participates in isoprenoid biosynthesis; isopentenyl diphosphate biosynthesis via DXP pathway; isopentenyl diphosphate from 1-deoxy-D-xylulose 5-phosphate: step 6/6. Its function is as follows. Catalyzes the conversion of 1-hydroxy-2-methyl-2-(E)-butenyl 4-diphosphate (HMBPP) into a mixture of isopentenyl diphosphate (IPP) and dimethylallyl diphosphate (DMAPP). Acts in the terminal step of the DOXP/MEP pathway for isoprenoid precursor biosynthesis. The sequence is that of 4-hydroxy-3-methylbut-2-enyl diphosphate reductase from Opitutus terrae (strain DSM 11246 / JCM 15787 / PB90-1).